We begin with the raw amino-acid sequence, 65 residues long: Venom protein Vn4.6 (65 aa).

The first 23 residues, 1-23 (MSKIILAIFLIVLCGLIFVTVDA), serve as a signal peptide directing secretion.

Contains 2 disulfide bonds. As to expression, expressed by the venom gland.

It localises to the secreted. In terms of biological role, endoparasitoid venom protein that interferes with the activation of host hemolymph prophenoloxidase. May act in conjunction with other venom proteins (such as Vn50), by competitive binding to the zymogen and thereby interrupting the enzyme. This is Venom protein Vn4.6 from Cotesia rubecula (Cabbage white butterfly parasite).